Consider the following 261-residue polypeptide: Pantothenate synthetase (261 aa).

An ATP-binding site is contributed by 29-36; that stretch reads MGALHNGH. Histidine 36 serves as the catalytic Proton donor. Glutamine 60 contributes to the (R)-pantoate binding site. Glutamine 60 serves as a coordination point for beta-alanine. 147 to 150 lines the ATP pocket; the sequence is GEKD. (R)-pantoate is bound at residue glutamine 153. An ATP-binding site is contributed by 184 to 187; sequence LSSR.

The protein belongs to the pantothenate synthetase family. In terms of assembly, homodimer.

The protein resides in the cytoplasm. It catalyses the reaction (R)-pantoate + beta-alanine + ATP = (R)-pantothenate + AMP + diphosphate + H(+). The protein operates within cofactor biosynthesis; (R)-pantothenate biosynthesis; (R)-pantothenate from (R)-pantoate and beta-alanine: step 1/1. Its function is as follows. Catalyzes the condensation of pantoate with beta-alanine in an ATP-dependent reaction via a pantoyl-adenylate intermediate. The polypeptide is Pantothenate synthetase (Francisella tularensis subsp. holarctica (strain FTNF002-00 / FTA)).